The following is a 441-amino-acid chain: Signal recognition particle 54 kDa protein (441 aa).

GTP contacts are provided by residues 103-110, 184-188, and 244-247; these read GVQGSGKT, DTAGR, and TKMD.

This sequence belongs to the GTP-binding SRP family. SRP54 subfamily. In terms of assembly, part of the signal recognition particle protein translocation system, which is composed of SRP and FtsY. Archaeal SRP consists of a 7S RNA molecule of 300 nucleotides and two protein subunits: SRP54 and SRP19.

It localises to the cytoplasm. The catalysed reaction is GTP + H2O = GDP + phosphate + H(+). In terms of biological role, involved in targeting and insertion of nascent membrane proteins into the cytoplasmic membrane. Binds to the hydrophobic signal sequence of the ribosome-nascent chain (RNC) as it emerges from the ribosomes. The SRP-RNC complex is then targeted to the cytoplasmic membrane where it interacts with the SRP receptor FtsY. In Aeropyrum pernix (strain ATCC 700893 / DSM 11879 / JCM 9820 / NBRC 100138 / K1), this protein is Signal recognition particle 54 kDa protein.